The primary structure comprises 434 residues: 3-phosphoshikimate 1-carboxyvinyltransferase (434 aa).

3-phosphoshikimate contacts are provided by Lys22, Ser23, and Arg27. Lys22 contributes to the phosphoenolpyruvate binding site. Phosphoenolpyruvate contacts are provided by Gly93 and Arg121. 3-phosphoshikimate is bound by residues Ser168, Ser169, Gln170, Ser199, Asp320, and Lys347. Gln170 provides a ligand contact to phosphoenolpyruvate. The active-site Proton acceptor is Asp320. Phosphoenolpyruvate-binding residues include Arg351, Arg394, and Lys419.

The protein belongs to the EPSP synthase family. As to quaternary structure, monomer.

The protein localises to the cytoplasm. It carries out the reaction 3-phosphoshikimate + phosphoenolpyruvate = 5-O-(1-carboxyvinyl)-3-phosphoshikimate + phosphate. It participates in metabolic intermediate biosynthesis; chorismate biosynthesis; chorismate from D-erythrose 4-phosphate and phosphoenolpyruvate: step 6/7. Functionally, catalyzes the transfer of the enolpyruvyl moiety of phosphoenolpyruvate (PEP) to the 5-hydroxyl of shikimate-3-phosphate (S3P) to produce enolpyruvyl shikimate-3-phosphate and inorganic phosphate. This Burkholderia cenocepacia (strain HI2424) protein is 3-phosphoshikimate 1-carboxyvinyltransferase.